Consider the following 69-residue polypeptide: Small cysteine-rich protein (69 aa).

An N-terminal signal peptide occupies residues 1 to 19 (MKLQLCLVLLLLGVLYVQS). The propeptide occupies 20–22 (VPE).

The protein belongs to the Cnidaria small cysteine-rich protein (SCRiP) family. delta subfamily. In terms of processing, contains 4 disulfide bonds.

Its subcellular location is the secreted. It localises to the nematocyst. Functionally, induces neurotoxic symptoms on zebrafish. Has also been claimed to be implied in calcification, but this function seems improbable. This chain is Small cysteine-rich protein, found in Metridium senile (Brown sea anemone).